The sequence spans 123 residues: Ribosome-binding factor A (123 aa).

It belongs to the RbfA family. Monomer. Binds 30S ribosomal subunits, but not 50S ribosomal subunits or 70S ribosomes.

It is found in the cytoplasm. Functionally, one of several proteins that assist in the late maturation steps of the functional core of the 30S ribosomal subunit. Associates with free 30S ribosomal subunits (but not with 30S subunits that are part of 70S ribosomes or polysomes). Required for efficient processing of 16S rRNA. May interact with the 5'-terminal helix region of 16S rRNA. This is Ribosome-binding factor A from Variovorax paradoxus (strain S110).